Reading from the N-terminus, the 85-residue chain is MEEKQIMAFRDEEGNKVEFEVVAKIYLGEKNKKEYIVLSPVEGNGDEADDFVFRVDKVNDSVEYNLVEDDEEFRLVKKEYKKLLY.

This sequence belongs to the UPF0473 family.

In Clostridium perfringens (strain SM101 / Type A), this protein is UPF0473 protein CPR_1590.